A 190-amino-acid polypeptide reads, in one-letter code: 3-isopropylmalate dehydratase small subunit (190 aa).

The protein belongs to the LeuD family. LeuD type 1 subfamily. As to quaternary structure, heterodimer of LeuC and LeuD.

It catalyses the reaction (2R,3S)-3-isopropylmalate = (2S)-2-isopropylmalate. It participates in amino-acid biosynthesis; L-leucine biosynthesis; L-leucine from 3-methyl-2-oxobutanoate: step 2/4. Functionally, catalyzes the isomerization between 2-isopropylmalate and 3-isopropylmalate, via the formation of 2-isopropylmaleate. The chain is 3-isopropylmalate dehydratase small subunit from Staphylococcus aureus (strain MSSA476).